Consider the following 345-residue polypeptide: Glycerol-3-phosphate dehydrogenase [NAD(P)+] (345 aa).

NADPH is bound by residues Ser-11, Trp-12, His-32, Arg-33, and Lys-106. Residues Lys-106, Gly-137, and Ser-139 each coordinate sn-glycerol 3-phosphate. Residue Ala-141 participates in NADPH binding. 5 residues coordinate sn-glycerol 3-phosphate: Lys-192, Asp-245, Ser-255, Arg-256, and Asn-257. Lys-192 functions as the Proton acceptor in the catalytic mechanism. Arg-256 is an NADPH binding site. Positions 280 and 282 each coordinate NADPH.

The protein belongs to the NAD-dependent glycerol-3-phosphate dehydrogenase family.

It is found in the cytoplasm. It catalyses the reaction sn-glycerol 3-phosphate + NAD(+) = dihydroxyacetone phosphate + NADH + H(+). The catalysed reaction is sn-glycerol 3-phosphate + NADP(+) = dihydroxyacetone phosphate + NADPH + H(+). Its pathway is membrane lipid metabolism; glycerophospholipid metabolism. Its function is as follows. Catalyzes the reduction of the glycolytic intermediate dihydroxyacetone phosphate (DHAP) to sn-glycerol 3-phosphate (G3P), the key precursor for phospholipid synthesis. This is Glycerol-3-phosphate dehydrogenase [NAD(P)+] from Bacillus pumilus (strain SAFR-032).